A 157-amino-acid polypeptide reads, in one-letter code: Large ribosomal subunit protein eL24 (157 aa).

Residues 95–157 form a disordered region; that stretch reads NQKPEVRKAQ…VSAPRVGGKR (63 aa). Over residues 96–117 the composition is skewed to basic and acidic residues; it reads QKPEVRKAQREQAIRAAKEAKK. Over residues 123–145 the composition is skewed to low complexity; the sequence is KKQTTQSSKAPAKSAQKQKIAKP.

Belongs to the eukaryotic ribosomal protein eL24 family. In terms of assembly, component of the large ribosomal subunit.

Its subcellular location is the cytoplasm. Functionally, component of the large ribosomal subunit. The ribosome is a large ribonucleoprotein complex responsible for the synthesis of proteins in the cell. Plays an essential role in early embryonic development. This Danio rerio (Zebrafish) protein is Large ribosomal subunit protein eL24 (rpl24).